The following is a 208-amino-acid chain: MEAPPVTMMPVTGGTINMMEYLLQGSVLDHSLESLIHRLRGLCDNMEPETFLDHEMVFLLKGQQASPFVLRARRSMDRAGAPWHLRYLGQPEMGDKNRHALVRNCVDIATSENLTDFLMEMGFRMDHEFVAKGHLFRKGIMKIMVYKIFRILVPGNTDSTEALSLSYLVELSVVAPAGQDMVSDDMKNFAEQLKPLVHLEKIDPKRLM.

Ser-66 is modified (phosphoserine).

This sequence belongs to the Mediator complex subunit 18 family. In terms of assembly, component of the Mediator complex, which is composed of MED1, MED4, MED6, MED7, MED8, MED9, MED10, MED11, MED12, MED13, MED13L, MED14, MED15, MED16, MED17, MED18, MED19, MED20, MED21, MED22, MED23, MED24, MED25, MED26, MED27, MED29, MED30, MED31, CCNC, CDK8 and CDC2L6/CDK11. The MED12, MED13, CCNC and CDK8 subunits form a distinct module termed the CDK8 module. Mediator containing the CDK8 module is less active than Mediator lacking this module in supporting transcriptional activation. Individual preparations of the Mediator complex lacking one or more distinct subunits have been variously termed ARC, CRSP, DRIP, PC2, SMCC and TRAP.

Its subcellular location is the nucleus. In terms of biological role, component of the Mediator complex, a coactivator involved in the regulated transcription of nearly all RNA polymerase II-dependent genes. Mediator functions as a bridge to convey information from gene-specific regulatory proteins to the basal RNA polymerase II transcription machinery. Mediator is recruited to promoters by direct interactions with regulatory proteins and serves as a scaffold for the assembly of a functional preinitiation complex with RNA polymerase II and the general transcription factors. This is Mediator of RNA polymerase II transcription subunit 18 (MED18) from Homo sapiens (Human).